The chain runs to 172 residues: Large ribosomal subunit protein uL10 (172 aa).

This sequence belongs to the universal ribosomal protein uL10 family. Part of the ribosomal stalk of the 50S ribosomal subunit. The N-terminus interacts with L11 and the large rRNA to form the base of the stalk. The C-terminus forms an elongated spine to which L12 dimers bind in a sequential fashion forming a multimeric L10(L12)X complex.

In terms of biological role, forms part of the ribosomal stalk, playing a central role in the interaction of the ribosome with GTP-bound translation factors. This is Large ribosomal subunit protein uL10 from Idiomarina loihiensis (strain ATCC BAA-735 / DSM 15497 / L2-TR).